The following is a 313-amino-acid chain: Aspartate carbamoyltransferase catalytic subunit (313 aa).

Carbamoyl phosphate-binding residues include Arg54 and Thr55. Lys82 contacts L-aspartate. Residues Arg104, His132, and Gln135 each coordinate carbamoyl phosphate. Arg165 and Arg219 together coordinate L-aspartate. Carbamoyl phosphate is bound by residues Gly260 and Pro261.

The protein belongs to the aspartate/ornithine carbamoyltransferase superfamily. ATCase family. As to quaternary structure, heterododecamer (2C3:3R2) of six catalytic PyrB chains organized as two trimers (C3), and six regulatory PyrI chains organized as three dimers (R2).

It carries out the reaction carbamoyl phosphate + L-aspartate = N-carbamoyl-L-aspartate + phosphate + H(+). The protein operates within pyrimidine metabolism; UMP biosynthesis via de novo pathway; (S)-dihydroorotate from bicarbonate: step 2/3. In terms of biological role, catalyzes the condensation of carbamoyl phosphate and aspartate to form carbamoyl aspartate and inorganic phosphate, the committed step in the de novo pyrimidine nucleotide biosynthesis pathway. The chain is Aspartate carbamoyltransferase catalytic subunit from Thermobifida fusca (strain YX).